A 37-amino-acid chain; its full sequence is Lambda-hexatoxin-Hf1a (37 aa).

Disulfide bonds link C4-C18, C11-C23, C14-C15, and C17-C34.

It belongs to the neurotoxin 11 (kappa toxin) family. As to expression, expressed by the venom gland.

It localises to the secreted. Functionally, this excitatory toxin inhibits insect calcium-activated potassium (KCa) channels (Slo-type). This chain is Lambda-hexatoxin-Hf1a, found in Hadronyche formidabilis (Northern tree funnel-web spider).